The primary structure comprises 458 residues: NADH-quinone oxidoreductase subunit N (458 aa).

A run of 14 helical transmembrane segments spans residues 2–22 (LLILPEITLTLIALLGQCFAL), 30–50 (IIYNIVILLCIISIFLTFKYS), 62–82 (GINIGISKSIVLLFTIVSLII), 93–113 (AIKFEFITLILLSIVGIFVAI), 118–138 (FLLLFCGMELTALTSYALAGF), 153–173 (FILGSLVTCLSLFGISFIYGF), 196–216 (LIIGIVLFLSSIFFKLASSPL), 235–255 (FTSAAKIGMVIVLFNISKLII), 261–281 (INYNLIKIIAILSMLFGAFGA), 290–310 (LMAYSTILNIGYVLIGVILPN), 319–339 (LYILIYAVVSIGFFTCLIMLF), 361–381 (IAALISIVMFSMIGIPPLTGF), 397–417 (FTLAYCGIFTSVVAAFYYLKV), and 438–458 (LLLINYLVLVFLLFGSFIILF).

The protein belongs to the complex I subunit 2 family. In terms of assembly, NDH-1 is composed of 14 different subunits. Subunits NuoA, H, J, K, L, M, N constitute the membrane sector of the complex.

The protein localises to the cell inner membrane. The catalysed reaction is a quinone + NADH + 5 H(+)(in) = a quinol + NAD(+) + 4 H(+)(out). Functionally, NDH-1 shuttles electrons from NADH, via FMN and iron-sulfur (Fe-S) centers, to quinones in the respiratory chain. The immediate electron acceptor for the enzyme in this species is believed to be ubiquinone. Couples the redox reaction to proton translocation (for every two electrons transferred, four hydrogen ions are translocated across the cytoplasmic membrane), and thus conserves the redox energy in a proton gradient. In Rickettsia typhi (strain ATCC VR-144 / Wilmington), this protein is NADH-quinone oxidoreductase subunit N.